The following is a 731-amino-acid chain: Polyadenylate-binding protein, cytoplasmic and nuclear (731 aa).

Residues 1-10 (MSADVSTTPA) show a composition bias toward polar residues. The tract at residues 1-51 (MSADVSTTPAAENVNGAAEASPAPAAAAPSATTPEVTAVENSTPAPAANQP) is disordered. The segment covering 17-39 (AAEASPAPAAAAPSATTPEVTAV) has biased composition (low complexity). RRM domains follow at residues 54 to 132 (ASLY…WSQR), 142 to 219 (GNVF…HHIS), 235 to 312 (TNVY…RAQK), and 338 to 472 (VNLY…LAQR). Disordered stretches follow at residues 369-429 (VMRD…SDKK) and 603-665 (GGRG…NAQT). A compositionally biased stretch (gly residues) spans 616 to 627 (GMRGGPGYGQGR). Residues 645-656 (QNAAAPAGPQEG) are compositionally biased toward low complexity. Residues 658 to 731 (AGGVNAQTLG…MRPLAFTMST (74 aa)) enclose the PABC domain.

It belongs to the polyadenylate-binding protein type-1 family.

The protein resides in the cytoplasm. It localises to the nucleus. Its function is as follows. Binds the poly(A) tail of mRNA. Appears to be an important mediator of the multiple roles of the poly(A) tail in mRNA biogenesis, stability and translation. In the nucleus, involved in both mRNA cleavage and polyadenylation. Is also required for efficient mRNA export to the cytoplasm. Acts in concert with a poly(A)-specific nuclease (PAN) to affect poly(A) tail shortening, which may occur concomitantly with either nucleocytoplasmic mRNA transport or translational initiation. In the cytoplasm, stimulates translation initiation and regulates mRNA decay through translation termination-coupled poly(A) shortening, probably mediated by PAN. This chain is Polyadenylate-binding protein, cytoplasmic and nuclear (pab1), found in Aspergillus niger (strain ATCC MYA-4892 / CBS 513.88 / FGSC A1513).